A 139-amino-acid polypeptide reads, in one-letter code: Large ribosomal subunit protein uL16 (139 aa).

A compositionally biased stretch (basic residues) spans 1 to 19; the sequence is MLIPRRVKYRKQHHPKRTG. Residues 1 to 23 form a disordered region; sequence MLIPRRVKYRKQHHPKRTGAAKG.

It belongs to the universal ribosomal protein uL16 family. As to quaternary structure, part of the 50S ribosomal subunit.

Binds 23S rRNA and is also seen to make contacts with the A and possibly P site tRNAs. This chain is Large ribosomal subunit protein uL16, found in Cutibacterium acnes (strain DSM 16379 / KPA171202) (Propionibacterium acnes).